We begin with the raw amino-acid sequence, 21 residues long: Ferredoxin (21 aa).

A 4Fe-4S ferredoxin-type domain is found at 2–21; it reads KVKVDADACIGCGVCVELCP. Residues cysteine 10, cysteine 13, and cysteine 16 each contribute to the [4Fe-4S] cluster site.

As to quaternary structure, monomer. It depends on [4Fe-4S] cluster as a cofactor.

Functionally, ferredoxins are iron-sulfur proteins that transfer electrons in a wide variety of metabolic reactions. This is Ferredoxin (fdxA) from Pyrococcus woesei.